The following is a 98-amino-acid chain: Plastocyanin (98 aa).

The 98-residue stretch at 1–98 (AAIVKLGGDD…AGMKMTITVQ (98 aa)) folds into the Plastocyanin-like domain. Cu cation contacts are provided by histidine 38, cysteine 83, histidine 86, and methionine 91.

This sequence belongs to the plastocyanin family. Cu(2+) serves as cofactor.

The protein localises to the plastid. It localises to the chloroplast thylakoid membrane. Participates in electron transfer between P700 and the cytochrome b6-f complex in photosystem I. The protein is Plastocyanin (PETE) of Ulva prolifera (Green seaweed).